The sequence spans 134 residues: Large ribosomal subunit protein bL17 (134 aa).

This sequence belongs to the bacterial ribosomal protein bL17 family. In terms of assembly, part of the 50S ribosomal subunit. Contacts protein L32.

The sequence is that of Large ribosomal subunit protein bL17 from Paracidovorax citrulli (strain AAC00-1) (Acidovorax citrulli).